The primary structure comprises 192 residues: Thymidine kinase (192 aa).

ATP contacts are provided by residues 9-16 (SAMNAGKS) and 87-90 (DECQ). The active-site Proton acceptor is the Glu-88. Positions 145, 147, 182, and 185 each coordinate Zn(2+).

The protein belongs to the thymidine kinase family. In terms of assembly, homotetramer.

The protein localises to the cytoplasm. The enzyme catalyses thymidine + ATP = dTMP + ADP + H(+). This is Thymidine kinase from Photobacterium profundum (strain SS9).